Here is a 220-residue protein sequence, read N- to C-terminus: Putative phosphatase YhcW (220 aa).

D8 (nucleophile) is an active-site residue. A divalent metal cation-binding residues include D8, D10, and D166. The active-site Proton donor is D10.

The protein belongs to the HAD-like hydrolase superfamily. CbbY/CbbZ/Gph/YieH family. The cofactor is a divalent metal cation.

This chain is Putative phosphatase YhcW (yhcW), found in Bacillus subtilis (strain 168).